Consider the following 243-residue polypeptide: Benzil reductase ((S)-benzoin forming) (243 aa).

I6, N80, Y147, K151, and T184 together coordinate NADP(+). Catalysis depends on Y147, which acts as the Proton acceptor.

Belongs to the short-chain dehydrogenases/reductases (SDR) family.

The protein resides in the cytoplasm. It catalyses the reaction (S)-benzoin + NADP(+) = benzil + NADPH + H(+). Functionally, reduces benzil stereospecifically to (S)-benzoin. The protein is Benzil reductase ((S)-benzoin forming) (yueD) of Bacillus subtilis (strain 168).